Reading from the N-terminus, the 521-residue chain is Lysine--tRNA ligase (521 aa).

The 'HIGH' region signature appears at 32-40 (PSGTVHIGN). The short motif at 280–284 (KISSS) is the 'KMSKS' region element.

It belongs to the class-I aminoacyl-tRNA synthetase family.

Its subcellular location is the cytoplasm. It catalyses the reaction tRNA(Lys) + L-lysine + ATP = L-lysyl-tRNA(Lys) + AMP + diphosphate. This is Lysine--tRNA ligase from Borrelia garinii subsp. bavariensis (strain ATCC BAA-2496 / DSM 23469 / PBi) (Borreliella bavariensis).